A 398-amino-acid polypeptide reads, in one-letter code: Phosphoglycerate kinase (398 aa).

Substrate is bound by residues 23–25, arginine 38, 61–64, arginine 122, and arginine 155; these read DFN and HLGK. ATP-binding positions include lysine 206, glycine 297, glutamate 328, and 354–357; that span reads GGDS.

Belongs to the phosphoglycerate kinase family. As to quaternary structure, monomer.

It localises to the cytoplasm. It catalyses the reaction (2R)-3-phosphoglycerate + ATP = (2R)-3-phospho-glyceroyl phosphate + ADP. Its pathway is carbohydrate degradation; glycolysis; pyruvate from D-glyceraldehyde 3-phosphate: step 2/5. This is Phosphoglycerate kinase from Clostridium kluyveri (strain NBRC 12016).